A 74-amino-acid polypeptide reads, in one-letter code: MPRTRKKVEVKVAPKGAKLQLKWIRSAIQAPVKHKLVIKGLGFTRLNQVIVREDSPSIRGMVAKVPHLVEIVQQ.

This sequence belongs to the universal ribosomal protein uL30 family. In terms of assembly, part of the 50S ribosomal subunit.

The chain is Large ribosomal subunit protein uL30 from Koribacter versatilis (strain Ellin345).